A 292-amino-acid polypeptide reads, in one-letter code: 4-hydroxy-tetrahydrodipicolinate synthase (292 aa).

Thr-45 contributes to the pyruvate binding site. Tyr-133 serves as the catalytic Proton donor/acceptor. Residue Lys-161 is the Schiff-base intermediate with substrate of the active site. Residue Ile-203 coordinates pyruvate.

This sequence belongs to the DapA family. Homotetramer; dimer of dimers.

Its subcellular location is the cytoplasm. It catalyses the reaction L-aspartate 4-semialdehyde + pyruvate = (2S,4S)-4-hydroxy-2,3,4,5-tetrahydrodipicolinate + H2O + H(+). It functions in the pathway amino-acid biosynthesis; L-lysine biosynthesis via DAP pathway; (S)-tetrahydrodipicolinate from L-aspartate: step 3/4. Functionally, catalyzes the condensation of (S)-aspartate-beta-semialdehyde [(S)-ASA] and pyruvate to 4-hydroxy-tetrahydrodipicolinate (HTPA). The chain is 4-hydroxy-tetrahydrodipicolinate synthase from Klebsiella pneumoniae subsp. pneumoniae (strain ATCC 700721 / MGH 78578).